Reading from the N-terminus, the 424-residue chain is Myb family transcription factor RLI1 (424 aa).

The tract at residues 144-165 (RPQKRDSGERTPLPPPSQQQHQ) is disordered. The 61-residue stretch at 238–298 (APSKTRIRWT…HLQKYRIAKY (61 aa)) folds into the HTH myb-type domain. Positions 269–294 (PKGILKLMNSDGLTIYHIKSHLQKYR) form a DNA-binding region, H-T-H motif. Positions 342-347 (LHEQLE) match the LHEQLE motif. Positions 342 to 391 (LHEQLEIQRNLQLRIEEQGKRLQKMFEDQLKASRSVMEPQELDDVVAFAA) form a coiled coil.

The protein belongs to the MYB-CC family. Homodimer. Interacts with PHR2 in the nucleus. Interacts with SPX1 and SPX2 in the nucleus; these interactions prevent binding to the promoters of target genes, thus regulating negatively leaf inclination in response to phosphate (Pi) starvation.

Its subcellular location is the nucleus. In terms of biological role, transcription factor binding to specific DNA sequences of target genes promoters, such as the motif R1BS 5'-NAKATNCN-3' and the motif P1BS 5'-GNATATNC-3' to trigger their expression. Nitrate-induced component involved in modulating phosphate (Pi) response and homeostasis together with PHR2; activates directly the expression of Pi starvation-induced (PSI) genes upon nitrate disponibility, thus triggering the nitrate-induced phosphate response (NIPR) promoting Pi uptake activity. Involved in the shoot architecture; positively regulates leaf inclination by affecting lamina joint cell elongation via the direct promotion of ILI4/BU1 and BC1 genes expression, especially in response to phosphate (Pi) availability. Regulates both brassinolide (BL) biosynthesis and signaling by directly activating BL-biosynthesis and signaling genes. The polypeptide is Myb family transcription factor RLI1 (Oryza sativa subsp. indica (Rice)).